Here is a 177-residue protein sequence, read N- to C-terminus: Protein ParB (177 aa).

Residues 1-26 (MKRRSYAMLRAAAALAVLVVASPAWA) form the signal peptide. One can recognise a TNase-like domain in the interval 27–157 (ELRGEVVRII…RGKRVGLWSD (131 aa)). Active-site residues include Arg-53, Glu-61, and Arg-95.

As to quaternary structure, monomer. Ca(2+) serves as cofactor. In terms of processing, the N-terminus is blocked.

It is found in the secreted. With respect to regulation, endonuclease activity is inhibited by EDTA. Its function is as follows. Involved in plasmid partition. An endonuclease that acts on supercoiled dsDNA, converting it first to open circular DNA and then linearizing it. Preferentially cleaves regions in dsDNA that are capable of forming ssDNA, such as AT-rich regions and sequences that can form cruciforms. Has poor endonucleolytic activity on linear DNA, has 5'-3' exonuclease activity on dsDNA cleaving generating 3'-phosphonucleotides. The polypeptide is Protein ParB (Escherichia coli).